A 342-amino-acid chain; its full sequence is Dihydroorotate dehydrogenase (quinone) (342 aa).

FMN contacts are provided by residues 60–64 (AGLDK) and Thr84. Lys64 serves as a coordination point for substrate. 109-113 (NRMGF) is a substrate binding site. Residues Asn137 and Asn170 each coordinate FMN. Asn170 is a binding site for substrate. The Nucleophile role is filled by Ser173. Asn175 provides a ligand contact to substrate. FMN-binding residues include Lys215 and Thr243. 244 to 245 (NT) serves as a coordination point for substrate. Residues Gly266, Gly295, and 316-317 (YS) each bind FMN.

Belongs to the dihydroorotate dehydrogenase family. Type 2 subfamily. In terms of assembly, monomer. FMN serves as cofactor.

The protein resides in the cell membrane. The catalysed reaction is (S)-dihydroorotate + a quinone = orotate + a quinol. Its pathway is pyrimidine metabolism; UMP biosynthesis via de novo pathway; orotate from (S)-dihydroorotate (quinone route): step 1/1. Functionally, catalyzes the conversion of dihydroorotate to orotate with quinone as electron acceptor. The chain is Dihydroorotate dehydrogenase (quinone) from Nitrosomonas europaea (strain ATCC 19718 / CIP 103999 / KCTC 2705 / NBRC 14298).